Here is a 212-residue protein sequence, read N- to C-terminus: Probable nicotinate-nucleotide adenylyltransferase (212 aa).

Belongs to the NadD family.

The catalysed reaction is nicotinate beta-D-ribonucleotide + ATP + H(+) = deamido-NAD(+) + diphosphate. It functions in the pathway cofactor biosynthesis; NAD(+) biosynthesis; deamido-NAD(+) from nicotinate D-ribonucleotide: step 1/1. In terms of biological role, catalyzes the reversible adenylation of nicotinate mononucleotide (NaMN) to nicotinic acid adenine dinucleotide (NaAD). The polypeptide is Probable nicotinate-nucleotide adenylyltransferase (Mycobacterium avium (strain 104)).